The sequence spans 196 residues: ATP-dependent Clp protease proteolytic subunit (196 aa).

Ser101 (nucleophile) is an active-site residue. His126 is a catalytic residue.

It belongs to the peptidase S14 family. As to quaternary structure, component of the chloroplastic Clp protease core complex.

It localises to the plastid. The protein localises to the chloroplast stroma. It catalyses the reaction Hydrolysis of proteins to small peptides in the presence of ATP and magnesium. alpha-casein is the usual test substrate. In the absence of ATP, only oligopeptides shorter than five residues are hydrolyzed (such as succinyl-Leu-Tyr-|-NHMec, and Leu-Tyr-Leu-|-Tyr-Trp, in which cleavage of the -Tyr-|-Leu- and -Tyr-|-Trp bonds also occurs).. Its function is as follows. Cleaves peptides in various proteins in a process that requires ATP hydrolysis. Has a chymotrypsin-like activity. Plays a major role in the degradation of misfolded proteins. This Lobularia maritima (Sweet alyssum) protein is ATP-dependent Clp protease proteolytic subunit.